We begin with the raw amino-acid sequence, 125 residues long: RxLR effector protein Avh6 (125 aa).

Positions Met-1–Ala-25 are cleaved as a signal peptide. The RxLR-dEER motif lies at Arg-48 to Arg-70.

The protein belongs to the RxLR effector family.

The protein localises to the secreted. The protein resides in the host cell. Functionally, effector that suppresses plant defense responses during the early stages of pathogen infection. Suppresses cell death induced by effectors and PAMPs in plant hosts. Triggers a hypersensitive response (HR) in the presence of Rps1d. Suppresses BAX-induced cell death and enhan,ced P.capsici infection in Nicotiana benthamiana. Also suppresses effector-triggered immunity induction by associating with Avr1b and Rps1b, suggesting a role in suppressing plant immunity. The sequence is that of RxLR effector protein Avh6 from Phytophthora sojae (strain P6497) (Soybean stem and root rot agent).